The following is a 125-amino-acid chain: 17 kDa gas vesicle protein (125 aa).

Belongs to the gas vesicle GvpC family.

Its subcellular location is the gas vesicle. Gas vesicles (GV) are hollow, gas filled proteinaceous nanostructures. During planktonic growth they allow positioning of the organism at a favorable depth for light or nutrient acquisition. The polypeptide is 17 kDa gas vesicle protein (Dactylococcopsis salina (strain PCC 8305) (Myxobactron salinum)).